Reading from the N-terminus, the 313-residue chain is tRNA-cytidine(32) 2-sulfurtransferase (313 aa).

The short motif at 60-65 (SGGKDS) is the PP-loop motif element. [4Fe-4S] cluster-binding residues include Cys-135, Cys-138, and Cys-226.

This sequence belongs to the TtcA family. In terms of assembly, homodimer. Requires Mg(2+) as cofactor. The cofactor is [4Fe-4S] cluster.

It localises to the cytoplasm. The enzyme catalyses cytidine(32) in tRNA + S-sulfanyl-L-cysteinyl-[cysteine desulfurase] + AH2 + ATP = 2-thiocytidine(32) in tRNA + L-cysteinyl-[cysteine desulfurase] + A + AMP + diphosphate + H(+). It participates in tRNA modification. Its function is as follows. Catalyzes the ATP-dependent 2-thiolation of cytidine in position 32 of tRNA, to form 2-thiocytidine (s(2)C32). The sulfur atoms are provided by the cysteine/cysteine desulfurase (IscS) system. The chain is tRNA-cytidine(32) 2-sulfurtransferase from Delftia acidovorans (strain DSM 14801 / SPH-1).